Consider the following 338-residue polypeptide: Glycerol-3-phosphate dehydrogenase [NAD(P)+] (338 aa).

The NADPH site is built by Ser-12, Trp-13, Lys-34, and Lys-110. Residues Lys-110, Gly-141, and Ser-143 each coordinate sn-glycerol 3-phosphate. Ala-145 contacts NADPH. Positions 196, 249, 259, 260, and 261 each coordinate sn-glycerol 3-phosphate. Lys-196 acts as the Proton acceptor in catalysis. NADPH is bound at residue Arg-260. NADPH is bound by residues Val-284 and Glu-286.

It belongs to the NAD-dependent glycerol-3-phosphate dehydrogenase family.

Its subcellular location is the cytoplasm. It carries out the reaction sn-glycerol 3-phosphate + NAD(+) = dihydroxyacetone phosphate + NADH + H(+). The catalysed reaction is sn-glycerol 3-phosphate + NADP(+) = dihydroxyacetone phosphate + NADPH + H(+). It functions in the pathway membrane lipid metabolism; glycerophospholipid metabolism. Functionally, catalyzes the reduction of the glycolytic intermediate dihydroxyacetone phosphate (DHAP) to sn-glycerol 3-phosphate (G3P), the key precursor for phospholipid synthesis. In Ligilactobacillus salivarius (strain UCC118) (Lactobacillus salivarius), this protein is Glycerol-3-phosphate dehydrogenase [NAD(P)+].